A 134-amino-acid chain; its full sequence is DNA-directed RNA polymerase subunit omega (134 aa).

The protein belongs to the RNA polymerase subunit omega family. In terms of assembly, the RNAP catalytic core consists of 2 alpha, 1 beta, 1 beta' and 1 omega subunit. When a sigma factor is associated with the core the holoenzyme is formed, which can initiate transcription.

It carries out the reaction RNA(n) + a ribonucleoside 5'-triphosphate = RNA(n+1) + diphosphate. Promotes RNA polymerase assembly. Latches the N- and C-terminal regions of the beta' subunit thereby facilitating its interaction with the beta and alpha subunits. This Brucella anthropi (strain ATCC 49188 / DSM 6882 / CCUG 24695 / JCM 21032 / LMG 3331 / NBRC 15819 / NCTC 12168 / Alc 37) (Ochrobactrum anthropi) protein is DNA-directed RNA polymerase subunit omega.